The chain runs to 204 residues: Casparian strip membrane protein 2 (204 aa).

The Cytoplasmic segment spans residues 1 to 41 (MKNESTFIDVPADSSSAMKGKAPLIGVAKDHTASGSGGYNR). A helical transmembrane segment spans residues 42–62 (GLSIFDFLLRLAAIVAASVAA). The Extracellular segment spans residues 63-92 (GTMFTSDETLPFFTQFLQFEAGYDDLPTFQ). The chain crosses the membrane as a helical span at residues 93–113 (FFVIAMSLVSGYIVLSLPISV). The Cytoplasmic segment spans residues 114-125 (VTIVRPLAAAPR). A helical transmembrane segment spans residues 126–146 (LLLLVLDTAVMGLTMAAASSA). Topologically, residues 147–178 (AAISYVAHNGNQNTNWLPICQQFFDFCQKTSG) are extracellular. The chain crosses the membrane as a helical span at residues 179–199 (AVVSSFVAVVFFMILVVLSGV). The Cytoplasmic segment spans residues 200-204 (ALERH).

The protein belongs to the Casparian strip membrane proteins (CASP) family. Homodimer and heterodimers.

It is found in the cell membrane. In terms of biological role, regulates membrane-cell wall junctions and localized cell wall deposition. Required for establishment of the Casparian strip membrane domain (CSD) and the subsequent formation of Casparian strips, a cell wall modification of the root endodermis that determines an apoplastic barrier between the intraorganismal apoplasm and the extraorganismal apoplasm and prevents lateral diffusion. The sequence is that of Casparian strip membrane protein 2 from Raphanus sativus (Radish).